The following is a 555-amino-acid chain: Formate--tetrahydrofolate ligase (555 aa).

64–71 (TKAGIGKT) lines the ATP pocket.

This sequence belongs to the formate--tetrahydrofolate ligase family.

The enzyme catalyses (6S)-5,6,7,8-tetrahydrofolate + formate + ATP = (6R)-10-formyltetrahydrofolate + ADP + phosphate. It participates in one-carbon metabolism; tetrahydrofolate interconversion. In Bacteroides fragilis (strain ATCC 25285 / DSM 2151 / CCUG 4856 / JCM 11019 / LMG 10263 / NCTC 9343 / Onslow / VPI 2553 / EN-2), this protein is Formate--tetrahydrofolate ligase.